A 283-amino-acid polypeptide reads, in one-letter code: MADITAALVKELRERTGAGMMDCKKALVESNGDIELAIENMRKSGAIKAAKKAGNVAADGVIKTKIEGNYGLILEVNCQTDFVAKDAGFQAFADKVLDAAFAGKITDVEVLKAQFEEERVALVAKIGENINIRRVASLEGEVLGSYLHGARIGVLIAATGADEELVKQIAMHVAASKPEFVKPEDVSAEVVEKEYQVQLDIAMQSGKPKEIAEKMVEGRMKKFTGEVSLTGQPFVIEPSKTVGQVLKEHNADVVNFIRFEVGEGIAKVENDFAAEVAAMSKQS.

The interval T80–V83 is involved in Mg(2+) ion dislocation from EF-Tu.

Belongs to the EF-Ts family.

Its subcellular location is the cytoplasm. Associates with the EF-Tu.GDP complex and induces the exchange of GDP to GTP. It remains bound to the aminoacyl-tRNA.EF-Tu.GTP complex up to the GTP hydrolysis stage on the ribosome. The polypeptide is Elongation factor Ts (Serratia proteamaculans (strain 568)).